A 344-amino-acid polypeptide reads, in one-letter code: Dihydroorotate dehydrogenase (quinone) (344 aa).

FMN contacts are provided by residues 65–69 (AGLDK) and Thr-89. Lys-69 provides a ligand contact to substrate. 114–118 (NRMGF) is a binding site for substrate. FMN is bound by residues Asn-145 and Asn-178. Asn-178 contributes to the substrate binding site. Ser-181 (nucleophile) is an active-site residue. Asn-183 is a binding site for substrate. FMN-binding residues include Lys-223 and Thr-251. 252–253 (NT) contributes to the substrate binding site. Residues Gly-274, Gly-303, and 324 to 325 (YS) contribute to the FMN site.

The protein belongs to the dihydroorotate dehydrogenase family. Type 2 subfamily. Monomer. It depends on FMN as a cofactor.

Its subcellular location is the cell membrane. The catalysed reaction is (S)-dihydroorotate + a quinone = orotate + a quinol. The protein operates within pyrimidine metabolism; UMP biosynthesis via de novo pathway; orotate from (S)-dihydroorotate (quinone route): step 1/1. Its function is as follows. Catalyzes the conversion of dihydroorotate to orotate with quinone as electron acceptor. In Cupriavidus necator (strain ATCC 17699 / DSM 428 / KCTC 22496 / NCIMB 10442 / H16 / Stanier 337) (Ralstonia eutropha), this protein is Dihydroorotate dehydrogenase (quinone).